A 477-amino-acid chain; its full sequence is Glycogen synthase (477 aa).

Position 15 (lysine 15) interacts with ADP-alpha-D-glucose.

The protein belongs to the glycosyltransferase 1 family. Bacterial/plant glycogen synthase subfamily.

The enzyme catalyses [(1-&gt;4)-alpha-D-glucosyl](n) + ADP-alpha-D-glucose = [(1-&gt;4)-alpha-D-glucosyl](n+1) + ADP + H(+). It participates in glycan biosynthesis; glycogen biosynthesis. Synthesizes alpha-1,4-glucan chains using ADP-glucose. The polypeptide is Glycogen synthase (Streptococcus pneumoniae (strain JJA)).